The primary structure comprises 907 residues: Catenin alpha-1 (907 aa).

Basic and acidic residues predominate over residues 870-879 (VKREKLDDGQ). The segment at 870 to 895 (VKREKLDDGQTNKVKRSSQKKHINPV) is disordered. Residues 882–892 (KVKRSSQKKHI) are compositionally biased toward basic residues.

It belongs to the vinculin/alpha-catenin family. In terms of assembly, interacts with ctnnb1, jupa and cdh2. Interacts with cdh1 during early stages of oogenesis, interaction is no longer present when oocyte develops into the unfertilized egg. Expressed in the skin (at protein level). Expressed in the ovary.

It localises to the cell junction. It is found in the adherens junction. Its subcellular location is the cytoplasm. The protein resides in the cytoskeleton. The protein localises to the cell membrane. It localises to the nucleus. In terms of biological role, associates with the cytoplasmic domain of a variety of cadherins, forming catenin and cadherin complexes which are further linked to the actin filament network and is thereby involved in cell-cell adhesion. Required for embryonic development, via maintenance of adherens junctions that facilitate the maintenance of the epithelial barrier. This is Catenin alpha-1 from Danio rerio (Zebrafish).